Here is a 256-residue protein sequence, read N- to C-terminus: Thioredoxin-dependent peroxide reductase, mitochondrial (256 aa).

The N-terminal 61 residues, 1–61 (MAAAVGRLLR…KLFSTSSSCH (61 aa)), are a transit peptide targeting the mitochondrion. The Thioredoxin domain maps to 63-221 (PAVTQHAPYF…TLRLVKAFQY (159 aa)). At Lys83 the chain carries N6-succinyllysine. Lys91 carries the N6-acetyllysine; alternate modification. At Lys91 the chain carries N6-succinyllysine; alternate. Residue Cys108 is the Cysteine sulfenic acid (-SOH) intermediate of the active site. Thr146 carries the phosphothreonine modification.

This sequence belongs to the peroxiredoxin family. AhpC/Prx1 subfamily. In terms of assembly, homodimer; disulfide-linked, upon oxidation. 6 homodimers assemble to form a ring-like dodecamer. Interacts with NEK6. Interacts with LRRK2. Interacts with MAP3K13. Interacts with RPS6KC1 (via PX domain). Phosphorylated by LRRK2; phosphorylation reduces perodixase activity. Post-translationally, the enzyme can be inactivated by further oxidation of the cysteine sulfenic acid (C(P)-SOH) to sulphinic acid (C(P)-SO2H) and sulphonic acid (C(P)-SO3H) instead of its condensation to a disulfide bond. In terms of processing, S-palmitoylated.

The protein localises to the mitochondrion. Its subcellular location is the cytoplasm. The protein resides in the early endosome. The catalysed reaction is a hydroperoxide + [thioredoxin]-dithiol = an alcohol + [thioredoxin]-disulfide + H2O. Thiol-specific peroxidase that catalyzes the reduction of hydrogen peroxide and organic hydroperoxides to water and alcohols, respectively. Plays a role in cell protection against oxidative stress by detoxifying peroxides. Acts synergistically with MAP3K13 to regulate the activation of NF-kappa-B in the cytosol. Required for the maintenance of physical strength. In Homo sapiens (Human), this protein is Thioredoxin-dependent peroxide reductase, mitochondrial (PRDX3).